Consider the following 459-residue polypeptide: MEPEILSIELIKPSSPTPRHLKTHKLCFLDQYRNHAYFPMVFFYSVTHDTNLNLSNETDIAQIVSVRLQLLKQSLPETLSLFYPFAGKIKDNLSIDCSDEGIYFTEARFKSPLKEFFNQQNFSCLTYKFVPFDAKELEGSISGLHVAKIQVTSFACGGIVICACLSHLFADGATLCSFLKCWVATACKNNEQRISPNNDASWLFPQNEAYPKEGTWLAMCPRFFGHGRFVTRRFVFDAKAIATIKAKASSSTRVQNPTPTRVEAVSALFSKCVMAAFKAKHGSHKTTLLTHSVNLRNKAKSILSEYSMGNIVWNANALCTNEEAELDLEGLVCKLREAMMKINGDFVKSLLGDEGFLNLCQAIKDENGVCSKAKERINFSSWCNFGLYDIDFGWGKPMWVSVIGLDGKLPYFSSTIILLDTRFGDGIEAWVYLLEEDMNTLELDKELLALATLDPCPLW.

Residues H167 and D391 each act as proton acceptor in the active site.

This sequence belongs to the plant acyltransferase family. Monomer. In terms of tissue distribution, expressed in maturing fruits and in juice vesicles.

The enzyme catalyses (1S)-1-acetoxy-luvungin A + acetyl-CoA = (1S)-1,7-diacetoxy-luvungin A + CoA. The protein operates within secondary metabolite biosynthesis; terpenoid biosynthesis. Functionally, acetyltransferase involved in the biosynthesis of limonoids triterpene natural products such as limonin, a compound with insecticidal activity responsible for the bitter taste in citrus. Catalyzes the formation of (1S)-1,7-diacetoxy-luvungin A from (1S)-1-acetoxy-luvungin A. The sequence is that of Limonoid 7-O-acetyltransferse from Citrus sinensis (Sweet orange).